A 304-amino-acid chain; its full sequence is Sulfate adenylyltransferase subunit 2 2 (304 aa).

The protein belongs to the PAPS reductase family. CysD subfamily. As to quaternary structure, heterodimer composed of CysD, the smaller subunit, and CysN.

It carries out the reaction sulfate + ATP + H(+) = adenosine 5'-phosphosulfate + diphosphate. Its pathway is sulfur metabolism; hydrogen sulfide biosynthesis; sulfite from sulfate: step 1/3. Functionally, with CysN forms the ATP sulfurylase (ATPS) that catalyzes the adenylation of sulfate producing adenosine 5'-phosphosulfate (APS) and diphosphate, the first enzymatic step in sulfur assimilation pathway. APS synthesis involves the formation of a high-energy phosphoric-sulfuric acid anhydride bond driven by GTP hydrolysis by CysN coupled to ATP hydrolysis by CysD. This Marinobacter nauticus (strain ATCC 700491 / DSM 11845 / VT8) (Marinobacter aquaeolei) protein is Sulfate adenylyltransferase subunit 2 2.